The primary structure comprises 937 residues: ABC transporter A family member 4 (937 aa).

A run of 7 helical transmembrane segments spans residues 34 to 54 (LIVIPFYLCVLLVGIQVLFDT), 340 to 360 (IASVIGPIFLTWVIVLLFPVI), 394 to 414 (FLAISTLYIICLMIFGSAIGL), 423 to 443 (SIQFIFYFLCINLQISIAFLV), 455 to 475 (VAAYLYVFGSGLLGGFLFQFM), 478 to 498 (GLSFPRGWIFVMELYPGFSLY), and 528 to 548 (AMDEVFYIIIIEWFLALIAAY). Residues 618-852 (DKLKKVYPGR…YGGSYVLTMT (235 aa)) enclose the ABC transporter domain. Position 653 to 660 (653 to 660 (GPNGAGKT)) interacts with ATP.

It belongs to the ABC transporter superfamily. ABCA family. CPR flippase (TC 3.A.1.211) subfamily.

It localises to the membrane. This Arabidopsis thaliana (Mouse-ear cress) protein is ABC transporter A family member 4 (ABCA4).